Reading from the N-terminus, the 133-residue chain is Profilin-1 (133 aa).

An intrachain disulfide couples cysteine 95 to cysteine 117.

This sequence belongs to the profilin family. In terms of assembly, dimer and tetramer. Occurs in many kinds of cells as a complex with monomeric actin in a 1:1 ratio.

Its subcellular location is the cytoplasm. It is found in the cytoskeleton. Its function is as follows. Binds to actin and affects the structure of the cytoskeleton. At high concentrations, profilin prevents the polymerization of actin, whereas it enhances it at low concentrations. By binding to PIP2, it inhibits the formation of IP3 and DG. Possesses high binding affinity for poly(L-proline). This is Profilin-1 from Artemisia vulgaris (Mugwort).